A 530-amino-acid chain; its full sequence is MFS transporter PfmaC (530 aa).

The disordered stretch occupies residues threonine 41–phenylalanine 76. A compositionally biased stretch (polar residues) spans threonine 42–glycine 56. A compositionally biased stretch (low complexity) spans alanine 59–glycine 69. 10 consecutive transmembrane segments (helical) span residues tyrosine 165–tyrosine 182, phenylalanine 195–tryptophan 215, alanine 226–leucine 246, tryptophan 261–phenylalanine 281, isoleucine 324–valine 344, asparagine 369–serine 389, glycine 396–tryptophan 416, leucine 422–glycine 442, alanine 456–leucine 476, and proline 493–leucine 513.

The protein belongs to the major facilitator superfamily. Allantoate permease family.

Its subcellular location is the cell membrane. MFS transporter; part of the gene cluster that mediates the biosynthesis of dihydroxynaphthalene (DHN)-melanin, a bluish-green pigment forming a dark layer in the conidial wall that protects the conidia from UV radiations. The protein is MFS transporter PfmaC of Pestalotiopsis fici (strain W106-1 / CGMCC3.15140).